Reading from the N-terminus, the 123-residue chain is Ribonuclease P protein component (123 aa).

The protein belongs to the RnpA family. Consists of a catalytic RNA component (M1 or rnpB) and a protein subunit.

The enzyme catalyses Endonucleolytic cleavage of RNA, removing 5'-extranucleotides from tRNA precursor.. RNaseP catalyzes the removal of the 5'-leader sequence from pre-tRNA to produce the mature 5'-terminus. It can also cleave other RNA substrates such as 4.5S RNA. The protein component plays an auxiliary but essential role in vivo by binding to the 5'-leader sequence and broadening the substrate specificity of the ribozyme. This Bordetella bronchiseptica (strain ATCC BAA-588 / NCTC 13252 / RB50) (Alcaligenes bronchisepticus) protein is Ribonuclease P protein component.